A 169-amino-acid polypeptide reads, in one-letter code: Endoribonuclease YbeY (169 aa).

Zn(2+)-binding residues include His128, His132, and His138.

This sequence belongs to the endoribonuclease YbeY family. It depends on Zn(2+) as a cofactor.

Its subcellular location is the cytoplasm. Its function is as follows. Single strand-specific metallo-endoribonuclease involved in late-stage 70S ribosome quality control and in maturation of the 3' terminus of the 16S rRNA. This Cyanothece sp. (strain PCC 7425 / ATCC 29141) protein is Endoribonuclease YbeY.